A 315-amino-acid chain; its full sequence is Neuroguidin (315 aa).

Position 2 is an N-acetylalanine (Ala-2). A coiled-coil region spans residues 7–41 (LESDVSSSITLLKNLQEQVMAVTAQIQALTTKVRA). Residues 41–174 (AGTYSTEKGL…KGSAKKYVPP (134 aa)) are necessary for interaction with EIF4E. Ser-121, Ser-142, and Ser-143 each carry phosphoserine. Residues 123–190 (SENDPLRFKP…YDETEAEREQ (68 aa)) form a disordered region. The segment covering 144–155 (EDEEESEAEEGQ) has biased composition (acidic residues). The segment covering 180 to 190 (HYDETEAEREQ) has biased composition (basic and acidic residues). The stretch at 181–203 (YDETEAEREQKRLEKAKRRALSS) forms a coiled coil. 2 positions are modified to phosphoserine: Ser-204 and Ser-214. Composition is skewed to basic and acidic residues over residues 212-225 (QYSD…DARH) and 232-241 (SQEDQHRVNY). Disordered stretches follow at residues 212-243 (QYSD…NYEE) and 284-315 (GTAH…RRRW). A compositionally biased stretch (basic residues) spans 295–315 (VKKRKKLPKKGRKKKGFRRRW).

This sequence belongs to the SAS10 family. Interacts with CPEB1 and EIF4E. As to expression, expressed in testis, ovary, spleen, kidney, hippocampus and cerebellum (at protein level). Expressed in testis, ovary, spleen, kidney, brain.

It localises to the nucleus. Its subcellular location is the nucleolus. It is found in the chromosome. The protein localises to the centromere. The protein resides in the cytoplasm. It localises to the cell projection. Its subcellular location is the axon. It is found in the dendrite. The protein localises to the filopodium. Functionally, part of the small subunit (SSU) processome, first precursor of the small eukaryotic ribosomal subunit. During the assembly of the SSU processome in the nucleolus, many ribosome biogenesis factors, an RNA chaperone and ribosomal proteins associate with the nascent pre-rRNA and work in concert to generate RNA folding, modifications, rearrangements and cleavage as well as targeted degradation of pre-ribosomal RNA by the RNA exosome. Its dissociation from the complex determines the transition from state pre-A1 to state pre-A1*. Inhibits mRNA translation in a cytoplasmic polyadenylation element (CPE)-dependent manner. This chain is Neuroguidin (Ngdn), found in Mus musculus (Mouse).